Reading from the N-terminus, the 68-residue chain is Alpha-conotoxin Lp1.1 (68 aa).

A signal peptide spans 1–21 (MGMRMMFIMFMLVVLATTVVT). Residues 22–48 (FTSDRALDAMNAAASNKASRLIALAVR) constitute a propeptide that is removed on maturation. Cystine bridges form between C50-C56 and C51-C64. The interval 52–54 (ARA) is lacks the Ser-Xaa-Pro motif that is crucial for potent interaction with nAChR. Residue G65 is modified to Glycine amide. Positions 66–68 (GGR) are excised as a propeptide.

Belongs to the conotoxin A superfamily. As to expression, expressed by the venom duct.

It localises to the secreted. Functionally, alpha-conotoxins act on postsynaptic membranes, they bind to the nicotinic acetylcholine receptors (nAChR) and thus inhibit them. Synthetic peptide inhibits alpha-6/alpha-3/beta-2 and alpha-3/beta-2 nicotinic acetylcholine receptors and causes uncoordinated movement when intramuscularly injected into goldfish. Has a distinct nAChR binding mode from other alpha-conotoxins, due to a different three residue motif (Ala-Xaa-Ala instead of the conserved Ser-Xaa-Pro motif). This is Alpha-conotoxin Lp1.1 from Conus leopardus (Leopard cone).